The following is a 383-amino-acid chain: Gamma-butyrobetaine dioxygenase (383 aa).

The Zn(2+) site is built by Cys46, Cys48, Cys51, and His91. Fe cation-binding residues include His209, Asp211, and His350.

It belongs to the gamma-BBH/TMLD family. In terms of assembly, homodimer. Fe(2+) is required as a cofactor. L-ascorbate serves as cofactor.

It localises to the cytoplasm. The catalysed reaction is 4-(trimethylamino)butanoate + 2-oxoglutarate + O2 = carnitine + succinate + CO2. The protein operates within amine and polyamine biosynthesis; carnitine biosynthesis. Catalyzes the formation of L-carnitine from gamma-butyrobetaine. The chain is Gamma-butyrobetaine dioxygenase from Pseudomonas sp. (strain AK-1).